Consider the following 145-residue polypeptide: Large ribosomal subunit protein uL16 (145 aa).

Belongs to the universal ribosomal protein uL16 family. As to quaternary structure, part of the 50S ribosomal subunit.

Functionally, binds 23S rRNA and is also seen to make contacts with the A and possibly P site tRNAs. This chain is Large ribosomal subunit protein uL16, found in Exiguobacterium sp. (strain ATCC BAA-1283 / AT1b).